A 438-amino-acid chain; its full sequence is Iroquois-class homeodomain protein IRX-6 (438 aa).

The homeobox DNA-binding region spans 143 to 205 (SAGRRKNATR…NARRRLKKEN (63 aa)). 2 disordered regions span residues 205 to 270 (NKMT…EAAV) and 388 to 438 (PRDS…GAEG). A compositionally biased stretch (basic and acidic residues) spans 214-223 (KGGEERKADS). Over residues 252–268 (LEDLEEEEEEEEAEEEA) the composition is skewed to acidic residues.

It belongs to the TALE/IRO homeobox family. In terms of tissue distribution, expressed in a subset of retinal ganglion cells and bipolar cells; including in type 2 and type 3a bipolar cells.

It localises to the nucleus. In terms of biological role, transcription factor. Binds to the iroquois binding site (IBS) motif of target genes to regulate gene expression; functions as a transcriptional activator or repressor. Modulates expression of RCVRN, VSX1, BHLHE22/BHLHB5 and TACR3/Nk3r. Required downstream of retinal bipolar cell specification for the terminal differentiation of type 2, type 3a and possibly type 6 bipolar cells. This Mus musculus (Mouse) protein is Iroquois-class homeodomain protein IRX-6 (Irx6).